The primary structure comprises 278 residues: MALKTFNPTTPGQRQLVMVDRSALYKGKPLKKLTEGKHSNGGRGNTGRITVRFRGGGHKQTYRLIDFKRTKVDVPATVERLEYDPNRTAFIALIKYADGELSYILAPQRLAVGDTVVAGSYVDVKPGNAMPMGNMPVGTIVHNVEMKIGKGGQMARSAGTYAQIVGRDHDYVILRLNSGEQRMVHGRCMATIGAVSNHDHMNTSIGKAGRTRWLGRRPHNRGVVMNPIDHPHGGGEGRTSGGRHPVTPWGKPTKGKKTRSNKSTNKFILISRHKRKKK.

Residues 222–278 are disordered; that stretch reads GVVMNPIDHPHGGGEGRTSGGRHPVTPWGKPTKGKKTRSNKSTNKFILISRHKRKKK.

It belongs to the universal ribosomal protein uL2 family. As to quaternary structure, part of the 50S ribosomal subunit. Forms a bridge to the 30S subunit in the 70S ribosome.

One of the primary rRNA binding proteins. Required for association of the 30S and 50S subunits to form the 70S ribosome, for tRNA binding and peptide bond formation. It has been suggested to have peptidyltransferase activity; this is somewhat controversial. Makes several contacts with the 16S rRNA in the 70S ribosome. The chain is Large ribosomal subunit protein uL2 from Afipia carboxidovorans (strain ATCC 49405 / DSM 1227 / KCTC 32145 / OM5) (Oligotropha carboxidovorans).